The primary structure comprises 307 residues: Pantothenate kinase (307 aa).

90-97 provides a ligand contact to ATP; that stretch reads GSVAVGKS.

This sequence belongs to the prokaryotic pantothenate kinase family.

It localises to the cytoplasm. The catalysed reaction is (R)-pantothenate + ATP = (R)-4'-phosphopantothenate + ADP + H(+). It functions in the pathway cofactor biosynthesis; coenzyme A biosynthesis; CoA from (R)-pantothenate: step 1/5. The sequence is that of Pantothenate kinase from Enterococcus faecalis (strain ATCC 700802 / V583).